We begin with the raw amino-acid sequence, 458 residues long: Biphenyl dioxygenase subunit alpha (458 aa).

The region spanning 58–156 is the Rieske domain; the sequence is WLLLGHESHV…KEGDCGFDKA (99 aa). [2Fe-2S] cluster contacts are provided by C100, H102, C120, and H123. Residues H233 and H239 each contribute to the Fe cation site.

Belongs to the bacterial ring-hydroxylating dioxygenase alpha subunit family. Heterohexamer consisting of three BphA subunits and three BphE subunits. A ferredoxin (BphF) and a ferredoxin reductase (BphG) must be present to obtain activity. [2Fe-2S] cluster serves as cofactor. The cofactor is Fe cation.

The enzyme catalyses biphenyl + NADH + O2 + H(+) = (2R,3S)-3-phenylcyclohexa-3,5-diene-1,2-diol + NAD(+). It functions in the pathway xenobiotic degradation; biphenyl degradation; 2-hydroxy-2,4-pentadienoate and benzoate from biphenyl: step 1/4. The protein is Biphenyl dioxygenase subunit alpha (bphA) of Metapseudomonas furukawaii (Pseudomonas furukawaii).